A 222-amino-acid chain; its full sequence is UPF0502 protein Shewmr4_1554 (222 aa).

The span at 175–193 shows a compositional bias: polar residues; it reads SLSADSPSAGSNSLNAQDR. The segment at 175-194 is disordered; that stretch reads SLSADSPSAGSNSLNAQDRQ.

The protein belongs to the UPF0502 family.

This Shewanella sp. (strain MR-4) protein is UPF0502 protein Shewmr4_1554.